Consider the following 316-residue polypeptide: tRNA dimethylallyltransferase (316 aa).

27-34 (GATATGKT) provides a ligand contact to ATP. Substrate is bound at residue 29 to 34 (TATGKT). Residues 52–55 (DSRQ) are interaction with substrate tRNA.

The protein belongs to the IPP transferase family. Monomer. It depends on Mg(2+) as a cofactor.

The catalysed reaction is adenosine(37) in tRNA + dimethylallyl diphosphate = N(6)-dimethylallyladenosine(37) in tRNA + diphosphate. In terms of biological role, catalyzes the transfer of a dimethylallyl group onto the adenine at position 37 in tRNAs that read codons beginning with uridine, leading to the formation of N6-(dimethylallyl)adenosine (i(6)A). This Treponema pallidum (strain Nichols) protein is tRNA dimethylallyltransferase.